A 117-amino-acid chain; its full sequence is Putative pterin-4-alpha-carbinolamine dehydratase (117 aa).

It belongs to the pterin-4-alpha-carbinolamine dehydratase family.

The catalysed reaction is (4aS,6R)-4a-hydroxy-L-erythro-5,6,7,8-tetrahydrobiopterin = (6R)-L-erythro-6,7-dihydrobiopterin + H2O. This chain is Putative pterin-4-alpha-carbinolamine dehydratase, found in Azoarcus sp. (strain BH72).